The following is a 290-amino-acid chain: 33 kDa chaperonin (290 aa).

2 disulfides stabilise this stretch: Cys235–Cys237 and Cys268–Cys271.

This sequence belongs to the HSP33 family. Under oxidizing conditions two disulfide bonds are formed involving the reactive cysteines. Under reducing conditions zinc is bound to the reactive cysteines and the protein is inactive.

Its subcellular location is the cytoplasm. In terms of biological role, redox regulated molecular chaperone. Protects both thermally unfolding and oxidatively damaged proteins from irreversible aggregation. Plays an important role in the bacterial defense system toward oxidative stress. This Streptococcus pyogenes serotype M28 (strain MGAS6180) protein is 33 kDa chaperonin.